We begin with the raw amino-acid sequence, 335 residues long: Dihydroorotate dehydrogenase (quinone) (335 aa).

Residues 58–62 (AGADK) and Thr-82 contribute to the FMN site. Position 62 (Lys-62) interacts with substrate. 107–111 (NRNGF) contacts substrate. Asn-135 and Asn-168 together coordinate FMN. Position 168 (Asn-168) interacts with substrate. Ser-171 acts as the Nucleophile in catalysis. Asn-173 is a binding site for substrate. Lys-213 and Gly-241 together coordinate FMN. Substrate is bound at residue 242–243 (NT). FMN contacts are provided by residues Gly-264, Gly-293, and 314–315 (YS).

It belongs to the dihydroorotate dehydrogenase family. Type 2 subfamily. As to quaternary structure, monomer. It depends on FMN as a cofactor.

The protein localises to the cell membrane. It catalyses the reaction (S)-dihydroorotate + a quinone = orotate + a quinol. It participates in pyrimidine metabolism; UMP biosynthesis via de novo pathway; orotate from (S)-dihydroorotate (quinone route): step 1/1. Its function is as follows. Catalyzes the conversion of dihydroorotate to orotate with quinone as electron acceptor. The protein is Dihydroorotate dehydrogenase (quinone) of Actinobacillus pleuropneumoniae serotype 3 (strain JL03).